Consider the following 195-residue polypeptide: IMP cyclohydrolase (195 aa).

The protein belongs to the archaeal IMP cyclohydrolase family.

It catalyses the reaction IMP + H2O = 5-formamido-1-(5-phospho-D-ribosyl)imidazole-4-carboxamide. It participates in purine metabolism; IMP biosynthesis via de novo pathway; IMP from 5-formamido-1-(5-phospho-D-ribosyl)imidazole-4-carboxamide: step 1/1. In terms of biological role, catalyzes the cyclization of 5-formylamidoimidazole-4-carboxamide ribonucleotide to IMP. This is IMP cyclohydrolase from Haloquadratum walsbyi (strain DSM 16790 / HBSQ001).